The primary structure comprises 1046 residues: Arrestin-related trafficking adapter 3 (1046 aa).

Residues 115 to 141 (YPPTEQKSKKKMDASAPNESNNAANNF) form a disordered region. Low complexity predominate over residues 128–140 (ASAPNESNNAANN). Phosphoserine is present on residues S155 and S162. 2 stretches are compositionally biased toward low complexity: residues 168–179 (SGLSSLNLSPLG) and 198–210 (RSSSVTSSNGPSR). The segment at 168 to 230 (SGLSSLNLSP…ATSPSVSHHN (63 aa)) is disordered. 2 positions are modified to phosphoserine: S213 and S586. Residues 605 to 614 (TRNSRQFNRN) show a composition bias toward polar residues. Disordered stretches follow at residues 605 to 627 (TRNSRQFNRNSKSHPSDNTIFNS) and 651 to 820 (PLSP…FAHS). A compositionally biased stretch (low complexity) spans 669-694 (FDFSSDFISDAASGTTTTEVSSSESS). A compositionally biased stretch (basic and acidic residues) spans 734 to 785 (KNSDKNSSETLNKKESMSKIEENKHKRETTPKKRENRDVKSLSTPQREESKD). Residues 802–811 (LSLSSSLHSS) show a composition bias toward low complexity. 2 positions are modified to phosphoserine: S826 and S838. Residues 868–889 (NHDKNELNRHSTNTSSTPASAR) form a disordered region. The span at 877–889 (HSTNTSSTPASAR) shows a compositional bias: polar residues. Position 900 is a phosphoserine (S900). A disordered region spans residues 986-1017 (QNSAESDHNNDIFTQGSGLTESSKNSDSEERF). Residues 996–1008 (DIFTQGSGLTESS) show a composition bias toward polar residues. Residues S1022 and S1023 each carry the phosphoserine modification.

The protein belongs to the ALY1 family. In terms of assembly, interacts with PCL6, PCL7 and RSP5. Ubiquitinated by RSP5. Post-translationally, phosphorylated by the cyclin-CDKs PCL6-PHO85 and PCL7-PHO85.

The protein localises to the cytoplasm. In terms of biological role, may regulate endocytosis by recruiting RSP5 ubiquitin ligase activity to specific plasma membrane proteins in response to extracellular stimuli. In Saccharomyces cerevisiae (strain ATCC 204508 / S288c) (Baker's yeast), this protein is Arrestin-related trafficking adapter 3 (ALY2).